The following is a 241-amino-acid chain: Transmembrane protein 176A (241 aa).

S38 bears the Phosphoserine mark. 4 helical membrane-spanning segments follow: residues 65-85 (WVMQ…LYIF), 93-113 (SGAP…AFIY), 127-147 (LLAL…AGRF), and 193-213 (LFIS…LASL).

This sequence belongs to the TMEM176 family. In terms of assembly, interacts with MCOLN2.

The protein localises to the membrane. The sequence is that of Transmembrane protein 176A (TMEM176A) from Bos taurus (Bovine).